The chain runs to 320 residues: MQNRNTFSWIKEQMTRSISVSIMIYVITRTAISNAYPIFAQQGYENPREATGRIVCANCHLANKPVDIEVPQAVLPDTVFEAVVRIPYDMQVKQVLANGKKGALNVGAVLILPEGFELAPPDRISPEMKEKIGKLSFQSYRPTKKNILVIGPVPGQKYSEITFPILSPDPATKKDVHFLKYPIYVGGNRGRGQIYPDGSKSNNTVYNATAAGIISKIVRKEKGGYEISIADASDGHQVVDIIPPGPELLVSEGESIKLDQPLTSNPNVGGFGQGDAEIVLQDPLRVQGLLFFLASVILAQIFLVLKKKQFEKVQLSEMNF.

A signal peptide spans M1 to A35. Heme-binding residues include Y36, C56, C59, and H60. The chain crosses the membrane as a helical span at residues V286–K306.

Belongs to the cytochrome f family. The 4 large subunits of the cytochrome b6-f complex are cytochrome b6, subunit IV (17 kDa polypeptide, petD), cytochrome f and the Rieske protein, while the 4 small subunits are PetG, PetL, PetM and PetN. The complex functions as a dimer. Heme serves as cofactor.

It is found in the plastid. Its subcellular location is the chloroplast thylakoid membrane. Functionally, component of the cytochrome b6-f complex, which mediates electron transfer between photosystem II (PSII) and photosystem I (PSI), cyclic electron flow around PSI, and state transitions. This is Cytochrome f from Platanus occidentalis (Sycamore).